The following is a 1222-amino-acid chain: Alpha-mannosidase D (1222 aa).

The first 21 residues, 1–21 (MESSKFVKIIWVFGIWILVFT), serve as a signal peptide directing secretion. The Extracellular portion of the chain corresponds to 22 to 1170 (FLIIYNNYDY…KYNRPNHLAL (1149 aa)). Histidine 71 and aspartate 73 together coordinate Zn(2+). Asparagine 175 carries N-linked (GlcNAc...) asparagine glycosylation. Residues aspartate 185 and histidine 453 each contribute to the Zn(2+) site. The active-site Nucleophile is the aspartate 185. N-linked (GlcNAc...) asparagine glycosylation is found at asparagine 492, asparagine 496, asparagine 547, asparagine 551, asparagine 566, asparagine 613, asparagine 665, asparagine 768, asparagine 785, asparagine 952, asparagine 981, asparagine 1069, and asparagine 1084. Residues 493 to 549 (KSNNKTNNNNNNNNKNNNNNNNNNNNNNNNLKNTNSISTTGSSSSSGSGSSNNNNNT) show a composition bias toward low complexity. The disordered stretch occupies residues 493-554 (KSNNKTNNNN…NNNNTVNKSE (62 aa)). Residues 1171 to 1191 (ILSLSIGIPAGILIIVIALVV) traverse the membrane as a helical segment. Topologically, residues 1192-1222 (TYKKRKNRKTLTSSNSSSNLIQQEDQTDYSP) are cytoplasmic. Low complexity predominate over residues 1202–1211 (LTSSNSSSNL). The disordered stretch occupies residues 1202–1222 (LTSSNSSSNLIQQEDQTDYSP). Residues 1212–1222 (IQQEDQTDYSP) are compositionally biased toward polar residues.

This sequence belongs to the glycosyl hydrolase 38 family. Zn(2+) serves as cofactor.

Its subcellular location is the membrane. It carries out the reaction Hydrolysis of terminal, non-reducing alpha-D-mannose residues in alpha-D-mannosides.. The chain is Alpha-mannosidase D (manD) from Dictyostelium discoideum (Social amoeba).